The primary structure comprises 140 residues: MNNQTLATQYEMDFSYNPLPFFSDIEDNLKFNKKLDLNLYCIKRPKQTCFIHITNPNMLAWGIESGDMLVVEKNDDLYSGDLVVLEENNEFHVYEFMAHSGNYLFMALDSTTQNINTKRLVKFTYYRHRDQYDSSNETSR.

Belongs to the peptidase S24 family.

This is an uncharacterized protein from Haemophilus influenzae (strain ATCC 51907 / DSM 11121 / KW20 / Rd).